The following is a 1502-amino-acid chain: Clustered mitochondria protein homolog (1502 aa).

Disordered stretches follow at residues 1–62 (MSES…EPLD), 571–615 (AQAE…NPMM), 755–799 (AEAE…EEDR), 1054–1085 (KDQE…GETV), 1381–1403 (ARER…RLGG), and 1429–1502 (GQGG…GAKR). Low complexity predominate over residues 7 to 35 (AAAQNGQAEEQQLQQQLDEQQQLEEQQQL). A compositionally biased stretch (basic and acidic residues) spans 53–62 (KPKDSTEPLD). The Clu domain occupies 399–693 (EILRTQLAFL…RLAPVDVEWL (295 aa)). Positions 575-586 (TEAEAETADAVE) are enriched in acidic residues. Basic and acidic residues predominate over residues 587–606 (GEQKKEDWVDVEKPTEKSGS). A compositionally biased stretch (low complexity) spans 781–792 (EEQSAAASAAAA). The span at 1054 to 1069 (KDQEEEENKREENIKS) shows a compositional bias: basic and acidic residues. Positions 1429 to 1451 (GQGGNPSANAAAATAGQGEQANG) are enriched in low complexity. Residues 1462 to 1471 (RGTESLEELV) are compositionally biased toward basic and acidic residues. Basic residues predominate over residues 1486-1502 (KRGKNALRGKRRTGAKR).

Belongs to the CLU family. As to quaternary structure, may associate with the eukaryotic translation initiation factor 3 (eIF-3) complex.

It localises to the cytoplasm. Its function is as follows. mRNA-binding protein involved in proper cytoplasmic distribution of mitochondria. This is Clustered mitochondria protein homolog from Cryptococcus neoformans var. neoformans serotype D (strain B-3501A) (Filobasidiella neoformans).